A 199-amino-acid polypeptide reads, in one-letter code: Chaperone protein TorD (199 aa).

This sequence belongs to the TorD/DmsD family. TorD subfamily.

The protein localises to the cytoplasm. Its function is as follows. Involved in the biogenesis of TorA. Acts on TorA before the insertion of the molybdenum cofactor and, as a result, probably favors a conformation of the apoenzyme that is competent for acquiring the cofactor. This Escherichia coli O127:H6 (strain E2348/69 / EPEC) protein is Chaperone protein TorD.